We begin with the raw amino-acid sequence, 568 residues long: Glucose-6-phosphate isomerase, cytosolic 1 (568 aa).

Glutamate 360 acts as the Proton donor in catalysis. Residues histidine 391 and lysine 516 contribute to the active site.

The protein belongs to the GPI family. In terms of assembly, homodimer.

The protein resides in the cytoplasm. It carries out the reaction alpha-D-glucose 6-phosphate = beta-D-fructose 6-phosphate. Its pathway is carbohydrate degradation; glycolysis; D-glyceraldehyde 3-phosphate and glycerone phosphate from D-glucose: step 2/4. The polypeptide is Glucose-6-phosphate isomerase, cytosolic 1 (PGIC1) (Clarkia xantiana (Gunsight clarkia)).